A 473-amino-acid chain; its full sequence is Photosystem II CP43 reaction center protein (473 aa).

A propeptide spanning residues 1–14 (MKTLYSLRRFYHVE) is cleaved from the precursor. N-acetylthreonine is present on Thr-15. The residue at position 15 (Thr-15) is a Phosphothreonine. A run of 5 helical transmembrane segments spans residues 69 to 93 (LFEV…PHLA), 134 to 155 (LLGP…KDRN), 178 to 200 (KALY…RKIT), 255 to 275 (KPFA…LSYS), and 291 to 312 (WFNN…ASQA). Glu-367 contributes to the [CaMn4O5] cluster binding site. Residues 447-471 (RARAAAAGFEKGIDRDFEPVLSMTP) form a helical membrane-spanning segment.

This sequence belongs to the PsbB/PsbC family. PsbC subfamily. PSII is composed of 1 copy each of membrane proteins PsbA, PsbB, PsbC, PsbD, PsbE, PsbF, PsbH, PsbI, PsbJ, PsbK, PsbL, PsbM, PsbT, PsbX, PsbY, PsbZ, Psb30/Ycf12, at least 3 peripheral proteins of the oxygen-evolving complex and a large number of cofactors. It forms dimeric complexes. Requires Binds multiple chlorophylls and provides some of the ligands for the Ca-4Mn-5O cluster of the oxygen-evolving complex. It may also provide a ligand for a Cl- that is required for oxygen evolution. PSII binds additional chlorophylls, carotenoids and specific lipids. as cofactor.

The protein localises to the plastid. It is found in the chloroplast thylakoid membrane. One of the components of the core complex of photosystem II (PSII). It binds chlorophyll and helps catalyze the primary light-induced photochemical processes of PSII. PSII is a light-driven water:plastoquinone oxidoreductase, using light energy to abstract electrons from H(2)O, generating O(2) and a proton gradient subsequently used for ATP formation. This Arabis hirsuta (Hairy rock-cress) protein is Photosystem II CP43 reaction center protein.